Consider the following 196-residue polypeptide: MKVVILDTGCANLSSVTYAVQRLGYTPVVSREAEIVLQADKLFLPGVGTAQAAMNQLEERDLIALIKACTQPVLGICLGMQLLGTHSDESGGIPTLGIVDTPVKKMIDHGLPLPHMGWNQVIPKAGHRLFRDIDDGAYFYFVHSYAMPVCENTIAQANYGEAFTAALEKDNFFGVQFHPERSGAAGAQLLKNFLEM.

The Glutamine amidotransferase type-1 domain maps to 2–196 (KVVILDTGCA…AQLLKNFLEM (195 aa)). Cysteine 77 (nucleophile) is an active-site residue. Catalysis depends on residues histidine 178 and glutamate 180.

In terms of assembly, heterodimer of HisH and HisF.

It localises to the cytoplasm. It catalyses the reaction 5-[(5-phospho-1-deoxy-D-ribulos-1-ylimino)methylamino]-1-(5-phospho-beta-D-ribosyl)imidazole-4-carboxamide + L-glutamine = D-erythro-1-(imidazol-4-yl)glycerol 3-phosphate + 5-amino-1-(5-phospho-beta-D-ribosyl)imidazole-4-carboxamide + L-glutamate + H(+). The enzyme catalyses L-glutamine + H2O = L-glutamate + NH4(+). It participates in amino-acid biosynthesis; L-histidine biosynthesis; L-histidine from 5-phospho-alpha-D-ribose 1-diphosphate: step 5/9. IGPS catalyzes the conversion of PRFAR and glutamine to IGP, AICAR and glutamate. The HisH subunit catalyzes the hydrolysis of glutamine to glutamate and ammonia as part of the synthesis of IGP and AICAR. The resulting ammonia molecule is channeled to the active site of HisF. The sequence is that of Imidazole glycerol phosphate synthase subunit HisH from Pectobacterium atrosepticum (strain SCRI 1043 / ATCC BAA-672) (Erwinia carotovora subsp. atroseptica).